Reading from the N-terminus, the 239-residue chain is Diablo IAP-binding mitochondrial protein (239 aa).

A mitochondrion-targeting transit peptide spans 1 to 22 (MAVLKSWLSRSVTLLFRYRQCL). Residues 56-60 (AVPIA) carry the IAP-binding motif. A disordered region spans residues 217-239 (RQKTQEEGEERAESEQEAYLRED).

Belongs to the Smac/DIABLO protein family. In terms of assembly, homodimer. Interacts with BEX3. Interacts with BIRC2/c-IAP1 (via BIR3 domain). Interacts with BIRC6/BRUCE. Interacts with BIRC7/livin. Interacts with XIAP/BIRC4 (via BIR3 domain). Interacts with the monomeric and dimeric form of BIRC5/survivin. Interacts with AREL1 (via HECT domain); in the cytoplasm following induction of apoptosis. In terms of processing, ubiquitinated by BIRC7/livin. Ubiquitinated by BIRC6. The precursor form is proteolytically cleaved by mitochondrial processing peptidase MPP to remove the transit peptide and produce an intermediate form. This is then processed by PARL to produce the mature cleaved form which is released from mitochondria into the cytosol in apoptotic cells.

The protein localises to the mitochondrion. Its subcellular location is the cytoplasm. It is found in the cytosol. Promotes apoptosis by activating caspases in the cytochrome c/Apaf-1/caspase-9 pathway. Acts by opposing the inhibitory activity of inhibitor of apoptosis proteins (IAP). Inhibits the activity of BIRC6/BRUCE by inhibiting its binding to caspases. The chain is Diablo IAP-binding mitochondrial protein from Pongo abelii (Sumatran orangutan).